The sequence spans 558 residues: Membrane protein insertase YidC (558 aa).

The next 5 helical transmembrane spans lie at 3 to 23 (IKRTVLWVIFFMSAVMLFDNW), 364 to 384 (FVGNWGWAIVLLTLLIKAVFF), 438 to 458 (LPVVIQIPVFISLYWVLLASV), 477 to 497 (PYFILPVLMAVSMFVQTKLNP), and 508 to 528 (MMFMPIAFSVMFFFFPAGLVL).

It belongs to the OXA1/ALB3/YidC family. Type 1 subfamily. In terms of assembly, interacts with the Sec translocase complex via SecD. Specifically interacts with transmembrane segments of nascent integral membrane proteins during membrane integration.

The protein resides in the cell inner membrane. In terms of biological role, required for the insertion and/or proper folding and/or complex formation of integral membrane proteins into the membrane. Involved in integration of membrane proteins that insert both dependently and independently of the Sec translocase complex, as well as at least some lipoproteins. Aids folding of multispanning membrane proteins. The protein is Membrane protein insertase YidC of Burkholderia pseudomallei (strain 668).